The primary structure comprises 917 residues: Sensor histidine kinase GacS (917 aa).

2 helical membrane-spanning segments follow: residues 11 to 31 (VLLLTLLPTSLMALVLGGYFT) and 168 to 188 (SLFASLLLIAAGLAGTALLAV). An HAMP domain is found at 192 to 244 (RTINNPLTQIKQAVAQLKDGNLETRLPPLGSQELDELASGINRMASTLQNAQE). One can recognise a Histidine kinase domain in the interval 291-512 (NMSHEIRTPL…EFWISLNLPK (222 aa)). His-294 bears the Phosphohistidine; by autocatalysis mark. The Response regulatory domain maps to 668–787 (RVLCVDDNPA…QLAQVVLKWT (120 aa)). A 4-aspartylphosphate modification is found at Asp-717. In terms of domain architecture, HPt spans 824–917 (KADLAADMLA…RLAAEARTNA (94 aa)). Residue His-863 is modified to Phosphohistidine.

In terms of processing, activation requires a sequential transfer of a phosphate group from a His in the primary transmitter domain, to an Asp in the receiver domain and to a His in the secondary transmitter domain.

The protein resides in the cell inner membrane. The catalysed reaction is ATP + protein L-histidine = ADP + protein N-phospho-L-histidine.. Member of the two-component regulatory system GacA/GacS which controls the expression of secondary metabolites and extracellular products. Activates GacA by phosphorylation. GacA acts (probably primarily) by activating expression of CsrA1 and CsrA2 antagonist small RNAs (sRNA) RsmX, RsmY and RsmZ which bind to and prevent translation repression by CsrA1 and CsrA2. Involved in the regulation of secondary metabolism and in the synthesis of the antifungal factors cyanide, 2,4-diacetylphloroglucinol and pyoluteorin. Exercises positive post-transcriptional control over the hcnABC and aprA genes; acts upstream of CsrA2 (rsmA). Controls expression of CsrA1 and CsrA2 antagonist sRNAs RsmX, RsmY and probably RsmZ. Probably controls expression of csrA1 (rsmE) and csrA2. The polypeptide is Sensor histidine kinase GacS (gacS) (Pseudomonas protegens (strain DSM 19095 / LMG 27888 / CFBP 6595 / CHA0)).